The following is a 517-amino-acid chain: MQNTDTTKYIIHSKINADGVIERPDIVGAIFGQTEGLLGADLDLRDLQKTGRIGRIEVMVTAKGGKTKGNIFVPSSLDKVETSILAASLETIDRVGPCSAKIEVFQVEDVRAVKRKKIIERAKLIFTKMFDETVPESQELADEVRQSVRVDELTYYGKSRIPCGPNVLNSDAIIILEGRADILNLLRYGIKNTICVGGTNIPPEVAELTKKKTVTAFTDGDRGGELIIRELLQVADIDYVARAPDGKCVEDLVQKEVIRALRRKVPVEQIIEKYGIQEREGEESTRVERGSKRKIRAPEIAPRITEKKLHKRIKIHRVSSKPDLYEEELPEEETKGKASAKAFEKVSVKAAEKVSEMVPATAGKVKTRSIVAKPQISARKAPAAARVSREKPAEKVPSAVKVSRGEAVRVSPAPVKTVPVSPEATRFRPHVEALKGTLTARILDSQDKVIEEIAVRDLASRLKTYKENIQSVVFDGVITQRLVDIASSNAIKNLIGVKIGNIAKVPADMEVLTASML.

Residues 171 to 257 (DAIIILEGRA…CVEDLVQKEV (87 aa)) form the Toprim domain. Mg(2+) contacts are provided by Glu177, Asp219, and Asp221.

Belongs to the archaeal DnaG primase family. In terms of assembly, forms a ternary complex with MCM helicase and DNA. Component of the archaeal exosome complex. It depends on Mg(2+) as a cofactor.

It carries out the reaction ssDNA + n NTP = ssDNA/pppN(pN)n-1 hybrid + (n-1) diphosphate.. Functionally, RNA polymerase that catalyzes the synthesis of short RNA molecules used as primers for DNA polymerase during DNA replication. Also part of the exosome, which is a complex involved in RNA degradation. Acts as a poly(A)-binding protein that enhances the interaction between heteromeric, adenine-rich transcripts and the exosome. The sequence is that of DNA primase DnaG from Methanosarcina barkeri (strain Fusaro / DSM 804).